Here is a 354-residue protein sequence, read N- to C-terminus: ORC1-type DNA replication protein 9 (354 aa).

ATP-binding positions include 63–67 (TGKTC), Tyr195, and Arg207.

Belongs to the CDC6/cdc18 family.

In terms of biological role, involved in regulation of DNA replication. This chain is ORC1-type DNA replication protein 9 (orc9-1), found in Halobacterium salinarum (strain ATCC 700922 / JCM 11081 / NRC-1) (Halobacterium halobium).